Here is a 239-residue protein sequence, read N- to C-terminus: Pathogenesis-related protein 5 (239 aa).

A signal peptide spans 1–23 (MANISSIHILFLVFITSGIAVMA). Disulfide bonds link C32/C238, C79/C89, C94/C99, C146/C228, C151/C211, C159/C174, C178/C187, and C188/C198.

It belongs to the thaumatin family.

Its subcellular location is the secreted. It is found in the extracellular space. The protein resides in the apoplast. Partially responsible for acquired pathogen resistance. The sequence is that of Pathogenesis-related protein 5 from Arabidopsis thaliana (Mouse-ear cress).